The chain runs to 450 residues: tRNA modification GTPase MnmE (450 aa).

(6S)-5-formyl-5,6,7,8-tetrahydrofolate contacts are provided by Arg-25, Glu-86, and Arg-126. The TrmE-type G domain occupies 221 to 373 (GLRVALVGRP…LVQALLERCG (153 aa)). Asn-231 contacts K(+). Residues 231–236 (NVGKSS), 250–256 (TDLPGTT), 275–278 (DTAG), and 336–339 (NKAD) contribute to the GTP site. Mg(2+) is bound at residue Ser-235. Residues Thr-250, Leu-252, and Thr-255 each coordinate K(+). Mg(2+) is bound at residue Thr-256. Lys-450 serves as a coordination point for (6S)-5-formyl-5,6,7,8-tetrahydrofolate.

It belongs to the TRAFAC class TrmE-Era-EngA-EngB-Septin-like GTPase superfamily. TrmE GTPase family. As to quaternary structure, homodimer. Heterotetramer of two MnmE and two MnmG subunits. K(+) is required as a cofactor.

Its subcellular location is the cytoplasm. In terms of biological role, exhibits a very high intrinsic GTPase hydrolysis rate. Involved in the addition of a carboxymethylaminomethyl (cmnm) group at the wobble position (U34) of certain tRNAs, forming tRNA-cmnm(5)s(2)U34. This chain is tRNA modification GTPase MnmE, found in Synechococcus sp. (strain CC9605).